The following is a 356-amino-acid chain: UDP-N-acetylglucosamine--N-acetylmuramyl-(pentapeptide) pyrophosphoryl-undecaprenol N-acetylglucosamine transferase (356 aa).

UDP-N-acetyl-alpha-D-glucosamine-binding positions include 15–17 (TGG), N127, R163, S191, I244, 263–268 (ALTVSE), and Q288.

This sequence belongs to the glycosyltransferase 28 family. MurG subfamily.

It localises to the cell inner membrane. It carries out the reaction di-trans,octa-cis-undecaprenyl diphospho-N-acetyl-alpha-D-muramoyl-L-alanyl-D-glutamyl-meso-2,6-diaminopimeloyl-D-alanyl-D-alanine + UDP-N-acetyl-alpha-D-glucosamine = di-trans,octa-cis-undecaprenyl diphospho-[N-acetyl-alpha-D-glucosaminyl-(1-&gt;4)]-N-acetyl-alpha-D-muramoyl-L-alanyl-D-glutamyl-meso-2,6-diaminopimeloyl-D-alanyl-D-alanine + UDP + H(+). The protein operates within cell wall biogenesis; peptidoglycan biosynthesis. Cell wall formation. Catalyzes the transfer of a GlcNAc subunit on undecaprenyl-pyrophosphoryl-MurNAc-pentapeptide (lipid intermediate I) to form undecaprenyl-pyrophosphoryl-MurNAc-(pentapeptide)GlcNAc (lipid intermediate II). The sequence is that of UDP-N-acetylglucosamine--N-acetylmuramyl-(pentapeptide) pyrophosphoryl-undecaprenol N-acetylglucosamine transferase from Yersinia pestis (strain Pestoides F).